Reading from the N-terminus, the 458-residue chain is Vitamin K-dependent protein C (458 aa).

A signal peptide spans 1–27; it reads IPDDVGYRNQKTASKEGVCVVSKCQDG. Positions 28 to 36 are excised as a propeptide; sequence PNTLPRAKR. Positions 37–82 constitute a Gla domain; that stretch reads ANSFLEELRPSSLERECVEEVCDLEEAKEIFQSVDDTLAFWYKYVD. 4-carboxyglutamate is present on residues Glu42, Glu43, Glu50, Glu52, Glu55, Glu56, Glu61, Glu62, and Glu65. Cys53 and Cys58 form a disulfide bridge. 4 cysteine pairs are disulfide-bonded: Cys86-Cys105, Cys95-Cys100, Cys99-Cys114, and Cys116-Cys125. EGF-like domains are found at residues 91 to 126 and 130 to 170; these read SEHP…SFCQ and RFSN…LQCE. The residue at position 107 (Asp107) is a (3R)-3-hydroxyaspartate. Asn133 is a glycosylation site (N-linked (GlcNAc...) asparagine). 5 disulfides stabilise this stretch: Cys134-Cys145, Cys141-Cys154, Cys156-Cys169, Cys177-Cys316, and Cys235-Cys251. The Peptidase S1 domain occupies 210–447; that stretch reads IDGKLTRRGD…YLDWIHSHIE (238 aa). His250 (charge relay system) is an active-site residue. N-linked (GlcNAc...) asparagine glycosylation is present at Asn287. Asp296 functions as the Charge relay system in the catalytic mechanism. Asn352 carries an N-linked (GlcNAc...) asparagine glycan. 2 disulfides stabilise this stretch: Cys370–Cys384 and Cys395–Cys423. Ser399 functions as the Charge relay system in the catalytic mechanism.

The protein belongs to the peptidase S1 family. As to quaternary structure, synthesized as a single chain precursor, which is cleaved into a light chain and a heavy chain held together by a disulfide bond. The enzyme is then activated by thrombin, which cleaves a tetradecapeptide from the amino end of the heavy chain; this reaction, which occurs at the surface of endothelial cells, is strongly promoted by thrombomodulin. The vitamin K-dependent, enzymatic carboxylation of some Glu residues allows the modified protein to bind calcium. Post-translationally, the iron and 2-oxoglutarate dependent 3-hydroxylation of aspartate and asparagine is (R) stereospecific within EGF domains. Plasma; synthesized in the liver.

It localises to the secreted. Its subcellular location is the golgi apparatus. It is found in the endoplasmic reticulum. It catalyses the reaction Degradation of blood coagulation factors Va and VIIIa.. Protein C is a vitamin K-dependent serine protease that regulates blood coagulation by inactivating factors Va and VIIIa in the presence of calcium ions and phospholipids. Exerts a protective effect on the endothelial cell barrier function. The protein is Vitamin K-dependent protein C (PROC) of Oryctolagus cuniculus (Rabbit).